The sequence spans 102 residues: Large ribosomal subunit protein bL21 (102 aa).

Belongs to the bacterial ribosomal protein bL21 family. As to quaternary structure, part of the 50S ribosomal subunit. Contacts protein L20.

Functionally, this protein binds to 23S rRNA in the presence of protein L20. The polypeptide is Large ribosomal subunit protein bL21 (Cytophaga hutchinsonii (strain ATCC 33406 / DSM 1761 / CIP 103989 / NBRC 15051 / NCIMB 9469 / D465)).